A 114-amino-acid chain; its full sequence is ATP synthase epsilon chain (114 aa).

It belongs to the ATPase epsilon chain family. F-type ATPases have 2 components, CF(1) - the catalytic core - and CF(0) - the membrane proton channel. CF(1) has five subunits: alpha(3), beta(3), gamma(1), delta(1), epsilon(1). CF(0) has three main subunits: a, b and c.

It is found in the cell membrane. Produces ATP from ADP in the presence of a proton gradient across the membrane. The sequence is that of ATP synthase epsilon chain from Wolbachia pipientis wMel.